A 133-amino-acid chain; its full sequence is Small ribosomal subunit protein uS8 (133 aa).

It belongs to the universal ribosomal protein uS8 family. As to quaternary structure, part of the 30S ribosomal subunit. Contacts proteins S5 and S12.

Its function is as follows. One of the primary rRNA binding proteins, it binds directly to 16S rRNA central domain where it helps coordinate assembly of the platform of the 30S subunit. This chain is Small ribosomal subunit protein uS8, found in Amoebophilus asiaticus (strain 5a2).